A 312-amino-acid polypeptide reads, in one-letter code: MKDYQILLYYCYTHIADPDAYREEHHLKCLELGLLGRIIIASEGLNGTVSGTEEGCRQYMEYVKADPRFEALEFKIEAHEGHAFQKLYVRVKPEIVHSSLKHVDPTKRTGKHLEPAEFKAMKDRDDVVVLDVRSNYEHQVGRFKNAVTIDMENFRDFPEKIKELDHLKGKKVLTYCTGGIKCEKASAFLLEQGFEDVYQLHGGIIKYGIEQGGEDFEGKCYVFDGRVIADVNKVNPSIISTCYVCGTLSDRMVNCSNPVCNRHEPMCEACGEKMQGACSEECKCHPEKRPYDGTGAYPKELNGYDPYLHVKR.

In terms of domain architecture, Rhodanese spans 123–216 (DRDDVVVLDV…YGIEQGGEDF (94 aa)). Residue C176 is the Cysteine persulfide intermediate of the active site.

The protein belongs to the TrhO family.

The catalysed reaction is uridine(34) in tRNA + AH2 + O2 = 5-hydroxyuridine(34) in tRNA + A + H2O. Functionally, catalyzes oxygen-dependent 5-hydroxyuridine (ho5U) modification at position 34 in tRNAs. The sequence is that of tRNA uridine(34) hydroxylase from Cytophaga hutchinsonii (strain ATCC 33406 / DSM 1761 / CIP 103989 / NBRC 15051 / NCIMB 9469 / D465).